We begin with the raw amino-acid sequence, 457 residues long: Succinate-semialdehyde dehydrogenase [NADP(+)] (457 aa).

NADP(+) is bound by residues 133 to 134 (WN), 157 to 160 (KHAS), and 209 to 210 (GS). The Proton acceptor role is filled by E231. An NADP(+)-binding site is contributed by L232. Residue C265 is the Nucleophile of the active site. E362 serves as a coordination point for NADP(+).

This sequence belongs to the aldehyde dehydrogenase family.

The catalysed reaction is succinate semialdehyde + NADP(+) + H2O = succinate + NADPH + 2 H(+). Functionally, catalyzes the NADP(+)-dependent oxidation of succinate semialdehyde to succinate. It is believed to be the main source of succinate semialdehyde dehydrogenase activity in Mycobacterium. In Mycobacterium leprae (strain TN), this protein is Succinate-semialdehyde dehydrogenase [NADP(+)] (gabD1).